The primary structure comprises 289 residues: Glycine--tRNA ligase alpha subunit (289 aa).

This sequence belongs to the class-II aminoacyl-tRNA synthetase family. Tetramer of two alpha and two beta subunits.

It localises to the cytoplasm. It catalyses the reaction tRNA(Gly) + glycine + ATP = glycyl-tRNA(Gly) + AMP + diphosphate. This is Glycine--tRNA ligase alpha subunit from Prochlorococcus marinus subsp. pastoris (strain CCMP1986 / NIES-2087 / MED4).